Consider the following 246-residue polypeptide: Probable transcriptional regulatory protein Pden_1905 (246 aa).

The interval Met1 to Arg21 is disordered.

The protein belongs to the TACO1 family.

It localises to the cytoplasm. This chain is Probable transcriptional regulatory protein Pden_1905, found in Paracoccus denitrificans (strain Pd 1222).